Here is a 256-residue protein sequence, read N- to C-terminus: UPF0246 protein TERTU_4575 (256 aa).

This sequence belongs to the UPF0246 family.

This Teredinibacter turnerae (strain ATCC 39867 / T7901) protein is UPF0246 protein TERTU_4575.